A 182-amino-acid chain; its full sequence is Keratin, type II cytoskeletal 60 kDa, component III (182 aa).

Residues 1–63 (ERGELALKDA…KLLEGEECRL (63 aa)) form the IF rod domain. The interval 1–63 (ERGELALKDA…KLLEGEECRL (63 aa)) is coil 2. Residues 63–182 (LSGEGVGPVN…TSSSRKSFKS (120 aa)) form a tail region. The segment at 157–182 (FGSGGGSSSSVKFVSTTSSSRKSFKS) is disordered. Residues 164–182 (SSSVKFVSTTSSSRKSFKS) show a composition bias toward low complexity.

This sequence belongs to the intermediate filament family. Heterotetramer of two type I and two type II keratins.

The chain is Keratin, type II cytoskeletal 60 kDa, component III from Bos taurus (Bovine).